A 345-amino-acid chain; its full sequence is S-adenosylmethionine:tRNA ribosyltransferase-isomerase (345 aa).

It belongs to the QueA family. In terms of assembly, monomer.

It localises to the cytoplasm. It carries out the reaction 7-aminomethyl-7-carbaguanosine(34) in tRNA + S-adenosyl-L-methionine = epoxyqueuosine(34) in tRNA + adenine + L-methionine + 2 H(+). It participates in tRNA modification; tRNA-queuosine biosynthesis. Its function is as follows. Transfers and isomerizes the ribose moiety from AdoMet to the 7-aminomethyl group of 7-deazaguanine (preQ1-tRNA) to give epoxyqueuosine (oQ-tRNA). This is S-adenosylmethionine:tRNA ribosyltransferase-isomerase from Shewanella baltica (strain OS155 / ATCC BAA-1091).